Here is an 802-residue protein sequence, read N- to C-terminus: Oligophrenin-1 (802 aa).

The 104-residue stretch at 265-368 folds into the PH domain; the sequence is QPTIEGYLYT…WMEAMDGKEP (104 aa). The 185-residue stretch at 380–564 folds into the Rho-GAP domain; the sequence is MELNEVGFKF…ILIEHFGKIY (185 aa). Disordered stretches follow at residues 569–588, 607–666, 680–770, and 783–802; these read EESAAPPVPPPRVTARRHKP, LDES…EPCP, GGTK…NAGE, and FETASRKTGSSQGRLPGDES. Polar residues predominate over residues 616-627; the sequence is HQTPNGTITSSI. Basic and acidic residues predominate over residues 716–732; the sequence is HHKEGDADSFSKVRPPG.

Interacts with HOMER1. Interacts with AMPA receptor complexes. Interacts with SH3GL2 (endophilin-A1). Interacts (via C-terminus) with NR1D1. As to expression, expressed in brain.

The protein localises to the postsynapse. The protein resides in the presynapse. It localises to the cell projection. Its subcellular location is the axon. It is found in the dendritic spine. The protein localises to the dendrite. The protein resides in the cytoplasm. Its function is as follows. Stimulates GTP hydrolysis of members of the Rho family. Its action on RHOA activity and signaling is implicated in growth and stabilization of dendritic spines, and therefore in synaptic function. Critical for the stabilization of AMPA receptors at postsynaptic sites. Critical for the regulation of synaptic vesicle endocytosis at presynaptic terminals. Required for the localization of NR1D1 to dendrites, can suppress its repressor activity and protect it from proteasomal degradation. This Homo sapiens (Human) protein is Oligophrenin-1 (OPHN1).